The chain runs to 444 residues: 23S rRNA (uracil(1939)-C(5))-methyltransferase RlmD (444 aa).

In terms of domain architecture, TRAM spans 5–64; it reads KPKLNLTSQTARIVNLSHDGRGIARINGKATFIQGALPGEVVEFQYTRVKKDFDEGKLLS. 4 residues coordinate [4Fe-4S] cluster: C77, C83, C86, and C166. Q276, F305, N310, E326, N353, and D374 together coordinate S-adenosyl-L-methionine. Catalysis depends on C400, which acts as the Nucleophile.

This sequence belongs to the class I-like SAM-binding methyltransferase superfamily. RNA M5U methyltransferase family. RlmD subfamily.

It catalyses the reaction uridine(1939) in 23S rRNA + S-adenosyl-L-methionine = 5-methyluridine(1939) in 23S rRNA + S-adenosyl-L-homocysteine + H(+). Its function is as follows. Catalyzes the formation of 5-methyl-uridine at position 1939 (m5U1939) in 23S rRNA. This Legionella pneumophila (strain Lens) protein is 23S rRNA (uracil(1939)-C(5))-methyltransferase RlmD.